The sequence spans 79 residues: Peptide Im-5 (79 aa).

Residues 1–23 form the signal peptide; the sequence is MKYRKQLLVLFFAYFLVVNESEA. The propeptide occupies 49 to 79; it reads RALMKRDLQDRMDPYQRNLKLDRYLKQLALD.

The protein belongs to the non-disulfide-bridged peptide (NDBP) superfamily. Medium-length antimicrobial peptide (group 3) family. In terms of tissue distribution, expressed by the venom gland.

Its subcellular location is the secreted. The protein resides in the target cell membrane. Its function is as follows. Antimicrobial peptide that may act by disrupting the integrity of the bacterial cell membrane. Has antibacterial activity against Gram-negative bacterium E.coli NBRC 3972 (MIC=10 uM) and against Gram-positive bacteria S.aureus NBRC 13276 (MIC=2.5-5 uM) and B.subtilis NBRC 3009 (MIC=0.5-1 uM). Also shows potent activity against antibiotic-sensitive and -resistant Acinetobacter baumannii (MIC=1.8-3.6 uM). Shows cytolytic activity against human and sheep erythrocytes. Toxic to cricket A.domestica. This chain is Peptide Im-5, found in Isometrus maculatus (Lesser brown scorpion).